Consider the following 293-residue polypeptide: MYEEMDKLIEKASILIEALPYIQKLYGKTVVIKYGGNAMINDKLKNWVMEDITLLKYIGVNPIVVHGGGPEINSVLKKLNVESQFVNGLRVTDMQTMEVAQMVLVGKTNKELVSMLNQKGGKAIGICGIDGNLIQARKHYEIVNGEKVDLGYVGEVVSINAKVLEMLAKDEYIPVVAPIGVGEDGTSYNINADTVAAEIAKAIKAEKLMFMTDVEGLKYDKNSSEIISAISADEVLKMIDEGKIDGGMIPKVLGCIDALKHGVNRTHILDGRIPHCILLEIFTDKGIGTMIHL.

Substrate is bound by residues glycine 68–glycine 69, arginine 90, and asparagine 189.

It belongs to the acetylglutamate kinase family. ArgB subfamily.

It is found in the cytoplasm. The catalysed reaction is N-acetyl-L-glutamate + ATP = N-acetyl-L-glutamyl 5-phosphate + ADP. The protein operates within amino-acid biosynthesis; L-arginine biosynthesis; N(2)-acetyl-L-ornithine from L-glutamate: step 2/4. Its function is as follows. Catalyzes the ATP-dependent phosphorylation of N-acetyl-L-glutamate. The protein is Acetylglutamate kinase of Caldicellulosiruptor saccharolyticus (strain ATCC 43494 / DSM 8903 / Tp8T 6331).